The primary structure comprises 548 residues: Beta-caryophyllene synthase (548 aa).

Residues R268, D305, D309, R446, and D449 each contribute to the (2E,6E)-farnesyl diphosphate site. Positions 305 and 309 each coordinate Mg(2+). Residues 305–309 (DDIYD) carry the DDXXD motif motif. Mg(2+) contacts are provided by D449 and E457.

Belongs to the terpene synthase family. It depends on Mg(2+) as a cofactor.

It catalyses the reaction (2E,6E)-farnesyl diphosphate = (-)-(E)-beta-caryophyllene + diphosphate. It participates in secondary metabolite biosynthesis; terpenoid biosynthesis. Its function is as follows. Sesquiterpene synthase that catalyzes the formation of sesquiterpenes and sesquiterpenoid alcohols. Converts farnesyl diphosphate (FPP) to beta-caryophyllene. Can use geranyl diphosphate (GPP) to produce myrcene, limonene and camphene. The chain is Beta-caryophyllene synthase from Lavandula angustifolia (Lavender).